Consider the following 452-residue polypeptide: Sodium-coupled neutral amino acid transporter 7 (452 aa).

11 consecutive transmembrane segments (helical) span residues Ala-46–Phe-66, Ala-74–Ala-94, Leu-120–Ile-140, Phe-168–Ser-188, Phe-195–Pro-215, Val-234–Gly-256, Ile-272–Phe-292, Ile-309–Leu-329, Val-361–Ile-381, Ile-385–Ile-405, and Ser-419–Gly-439.

This sequence belongs to the amino acid/polyamine transporter 2 family.

It localises to the lysosome membrane. Its subcellular location is the cell projection. The protein resides in the axon. The catalysed reaction is L-asparagine(in) + Na(+)(in) = L-asparagine(out) + Na(+)(out). It catalyses the reaction L-glutamine(in) + Na(+)(in) = L-glutamine(out) + Na(+)(out). Symporter that selectively cotransports sodium ions and amino acids, such as L-glutamine and L-asparagine from the lysosome into the cytoplasm and may participates in mTORC1 activation. The transport activity requires an acidic lysosomal lumen. In Xenopus laevis (African clawed frog), this protein is Sodium-coupled neutral amino acid transporter 7.